The chain runs to 350 residues: MSKNKLSKGQQRRVQANHQRRLRTDRKPELDDSQLGDAQEGIVISRFGQHADVEAADGVQHRCNIRRTIKSLVTGDRVVWRPGLQAQEGVRVKGIVEAVHERTSVLTRPDLYDGVKPIAANIDQIVIVSAILPELSLNIIDRYLVACETLDVEPLIVLNKIDLLDADGRKFVDGMMDIYRRIGYNVLEVSSQTREGMEAFEQALAGRISIFAGQSGVGKSSLLNALLPPTDNEILVNTVSDNSGLGQHTTTAARLYHFQHGGDVIDSPGVREFGLWHLAPEQITQGFVEFRDYLGHCKFRDCSHTNDPGCALREAVEQGKIAEERFDNYHRILESMEQAKPRKTSDSDEK.

Polar residues predominate over residues 1–17 (MSKNKLSKGQQRRVQAN). Residues 1 to 35 (MSKNKLSKGQQRRVQANHQRRLRTDRKPELDDSQL) form a disordered region. The 171-residue stretch at 103 to 273 (TSVLTRPDLY…VIDSPGVREF (171 aa)) folds into the CP-type G domain. GTP-binding positions include 159–162 (NKID) and 213–221 (GQSGVGKSS). Positions 297, 302, 304, and 310 each coordinate Zn(2+).

Belongs to the TRAFAC class YlqF/YawG GTPase family. RsgA subfamily. Monomer. Associates with 30S ribosomal subunit, binds 16S rRNA. Zn(2+) is required as a cofactor.

The protein localises to the cytoplasm. One of several proteins that assist in the late maturation steps of the functional core of the 30S ribosomal subunit. Helps release RbfA from mature subunits. May play a role in the assembly of ribosomal proteins into the subunit. Circularly permuted GTPase that catalyzes slow GTP hydrolysis, GTPase activity is stimulated by the 30S ribosomal subunit. The polypeptide is Small ribosomal subunit biogenesis GTPase RsgA (Yersinia enterocolitica serotype O:8 / biotype 1B (strain NCTC 13174 / 8081)).